The primary structure comprises 1383 residues: DNA-directed RNA polymerase subunit beta'' (1383 aa).

C220, C289, C296, and C299 together coordinate Zn(2+).

This sequence belongs to the RNA polymerase beta' chain family. RpoC2 subfamily. In terms of assembly, in plastids the minimal PEP RNA polymerase catalytic core is composed of four subunits: alpha, beta, beta', and beta''. When a (nuclear-encoded) sigma factor is associated with the core the holoenzyme is formed, which can initiate transcription. Zn(2+) is required as a cofactor.

Its subcellular location is the plastid. It is found in the chloroplast. The catalysed reaction is RNA(n) + a ribonucleoside 5'-triphosphate = RNA(n+1) + diphosphate. DNA-dependent RNA polymerase catalyzes the transcription of DNA into RNA using the four ribonucleoside triphosphates as substrates. This Oenothera biennis (German evening primrose) protein is DNA-directed RNA polymerase subunit beta''.